The chain runs to 325 residues: Hydroxylase/desaturase poxK (325 aa).

Residues 1–12 (MTATATPVPTVA) are compositionally biased toward low complexity. The tract at residues 1 to 25 (MTATATPVPTVASHAQDITLPPPPK) is disordered.

The protein belongs to the asaB hydroxylase/desaturase family.

The protein operates within secondary metabolite biosynthesis. Its function is as follows. Hydroxylase/desaturase; part of the gene cluster that mediates the biosynthesis of oxaleimides, cytotoxic compounds containing an unusual disubstituted succinimide moiety. The first step of the pathway is provided by the HR-PKS poxF that serves in a new mode of collaborative biosynthesis with the PKS-NRPS poxE, by providing the olefin containing amino acid substrate via the synthesis of an ACP-bound dec-4-enoate. The cytochrome P450 monooxygenase poxM-catalyzed oxidation at the alpha-position creates the enzyme-bound 2-hydroxydec-4-enoyl-ACP thioester, which may be prone to spontaneous hydrolysis to yield 2-hydroxydec-4-enoic acid due to increased electrophilicity of the carbonyl. 2-hydroxydec-4-enoic acid can then be further oxidized by poxM to yield the alpha-ketoacid 2-oxodec-4-enoicacid, which is reductively aminated by the aminotransferase poxL to yield (S,E)-2-aminodec-4-enoic acid. The Hybrid PKS-NRPS synthetase poxE then performs condensation between the octaketide product of its PKS modules and the amino group of (S,E)-2-aminodec-4-enoic acid which is activated and incorporated by the adenylation domain. The resulting aminoacyl product can be cyclized by the Diels-Alderase PoxQ and reductively released by the reductive (R) domain of poxE to yield an aldehyde intermediate. The released aldehyde is then substrate for a Knoevenagel condensation by the hydrolyase poxO followed by an oxidation at the 5-position of the pyrrolidone ring. The presence of the olefin from the amino acid building block allows for migration of the substituted allyl group to occur. This allylic transposition reaction takes place in a conjugate addition, semipinacol-like fashion to yield a succinimide intermediate. Iterative two-electron oxidations of the C7 methyl of the succinimide intermediate to the carboxylic acid can be catalyzed by one of two remaining cytochrome P450 monooxygenasess poxC or poxD to yield oxaleimide A. Subsequent oxidation yields the maleimide scaffold oxaleimide I. Both oxaleimide A and oxaleimide I can undergo oxidative modifications in the decalin ring to yield the series of products oxaleimides B to H. The chain is Hydroxylase/desaturase poxK from Penicillium oxalicum.